The following is a 118-amino-acid chain: Protein BEX4 (118 aa).

A disordered region spans residues V14 to R50. Positions K28–K44 are enriched in basic and acidic residues. The tract at residues S30–A88 is interaction with SIRT2. Positions S30–P118 are interaction with alpha-tubulin. C115 contacts Zn(2+).

This sequence belongs to the BEX family. Interacts with alpha-tubulin. Interacts with SIRT2. Ubiquitinated and degraded by the proteasome.

Its subcellular location is the cytoplasm. It is found in the cytoskeleton. The protein localises to the spindle pole. It localises to the nucleus. In terms of biological role, may play a role in microtubule deacetylation by negatively regulating the SIRT2 deacetylase activity toward alpha-tubulin and thereby participate in the control of cell cycle progression and genomic stability. In absence of reductive stress, acts as a pseudosubstrate for the CRL2(FEM1B) complex: associates with FEM1B via zinc, thereby preventing association between FEM1B and its substrates. The chain is Protein BEX4 from Rattus norvegicus (Rat).